The primary structure comprises 521 residues: 7-deoxyloganic acid hydroxylase (521 aa).

The helical transmembrane segment at 8-28 (IIFLVFVSLTLYWVYRILDWV) threads the bilayer. 2 N-linked (GlcNAc...) asparagine glycosylation sites follow: asparagine 107 and asparagine 311. Cysteine 469 contacts heme.

The protein belongs to the cytochrome P450 family. Mostly present in actively growing aerial organs, including leaves, flower buds and stems, and, to a lower extent, in mature leaves, roots and opened flowers. Expressed in the leaf internal phloem-associated parenchyma (IPAP) inside the mesophyll.

Its subcellular location is the endoplasmic reticulum membrane. The enzyme catalyses 7-deoxyloganate + reduced [NADPH--hemoprotein reductase] + O2 = loganate + oxidized [NADPH--hemoprotein reductase] + H2O + H(+). The protein operates within alkaloid biosynthesis. Component of the seco-iridoid and derivatives monoterpenoid indole alkaloids (MIAs, e.g. vincristine, quinine, and strychnine) biosynthesis pathway. Catalyzes the conversion of 7-deoxyloganic acid into loganic acid. Not active on 7-deoxyloganetic acid. The polypeptide is 7-deoxyloganic acid hydroxylase (Catharanthus roseus (Madagascar periwinkle)).